The chain runs to 468 residues: Uronate isomerase (468 aa).

Belongs to the metallo-dependent hydrolases superfamily. Uronate isomerase family.

It catalyses the reaction D-glucuronate = D-fructuronate. It carries out the reaction aldehydo-D-galacturonate = keto-D-tagaturonate. The protein operates within carbohydrate metabolism; pentose and glucuronate interconversion. The chain is Uronate isomerase from Brachyspira hyodysenteriae (strain ATCC 49526 / WA1).